The primary structure comprises 464 residues: Properdin (464 aa).

Positions 1-22 are cleaved as a signal peptide; the sequence is MPAEMQAPQWLLLLLVILPATG. TSP type-1 domains are found at residues 24–72, 73–130, 132–187, 189–251, 253–309, 311–372, and 374–457; these read DPVL…QACR, SPQW…PCCP, MGGW…KTCP, HGAW…PPCP, AGGW…VPCP, NGEW…HNCI, and KGSW…PVCK. 3 cysteine pairs are disulfide-bonded: cysteine 28/cysteine 52, cysteine 39/cysteine 68, and cysteine 53/cysteine 71. 2 C-linked (Man) tryptophan glycosylation sites follow: tryptophan 79 and tryptophan 82. Intrachain disulfides connect cysteine 85/cysteine 123, cysteine 89/cysteine 129, cysteine 100/cysteine 107, cysteine 128/cysteine 166, cysteine 144/cysteine 180, cysteine 148/cysteine 186, and cysteine 159/cysteine 170. 3 C-linked (Man) tryptophan glycosylation sites follow: tryptophan 135, tryptophan 138, and tryptophan 141. Residue threonine 147 is glycosylated (O-linked (Fuc...) threonine). C-linked (Man) tryptophan glycosylation is found at tryptophan 192, tryptophan 195, and tryptophan 198. 3 disulfides stabilise this stretch: cysteine 201–cysteine 244, cysteine 205–cysteine 250, and cysteine 220–cysteine 234. An O-linked (Fuc...) serine glycan is attached at serine 204. C-linked (Man) tryptophan glycans are attached at residues tryptophan 256 and tryptophan 259. Intrachain disulfides connect cysteine 265/cysteine 302, cysteine 269/cysteine 308, and cysteine 280/cysteine 292. O-linked (Fuc...) threonine glycosylation is present at threonine 268. Tryptophan 317 and tryptophan 320 each carry a C-linked (Man) tryptophan glycan. 3 cysteine pairs are disulfide-bonded: cysteine 323/cysteine 365, cysteine 332/cysteine 371, and cysteine 345/cysteine 355. The interaction with Complement C3 beta chain stretch occupies residues 346-354; sequence GGRKFNGKP. 3 C-linked (Man) tryptophan glycosylation sites follow: tryptophan 377, tryptophan 380, and tryptophan 383. Disulfide bonds link cysteine 386/cysteine 450, cysteine 390/cysteine 456, and cysteine 402/cysteine 434. The N-linked (GlcNAc...) asparagine glycan is linked to asparagine 423.

As to quaternary structure, in plasma, properdin exists as dimers, trimers or tetramers in the relative proportions of 26:54:20. Interacts with the pro-C3-convertase enzyme complex (C3b-Bb) comprised of Complement C3 beta chain (C3b) and the Complement factor B Bb fragment (Bb), where it binds (via its TSP type-1 5 domain) with C3b and Bb. This interaction stabilizes the complex and allows it to become the active C3-convertase enzyme complex (C3b-Bb-FP). Interacts with C3b. Interacts with CFB.

Its subcellular location is the secreted. In terms of biological role, a positive regulator of the alternate pathway of complement. It binds to and stabilizes the C3- and C5-convertase enzyme complexes. Inhibits CFI-CFH mediated degradation of Inhibits CFI-CFH mediated degradation of Complement C3 beta chain (C3b). The chain is Properdin (Cfp) from Mus musculus (Mouse).